Here is a 100-residue protein sequence, read N- to C-terminus: Large ribosomal subunit protein eL21 (100 aa).

It belongs to the eukaryotic ribosomal protein eL21 family.

In Pyrobaculum arsenaticum (strain DSM 13514 / JCM 11321 / PZ6), this protein is Large ribosomal subunit protein eL21.